Reading from the N-terminus, the 123-residue chain is Large ribosomal subunit protein uL24 (123 aa).

This sequence belongs to the universal ribosomal protein uL24 family. In terms of assembly, part of the 50S ribosomal subunit.

Functionally, one of two assembly initiator proteins, it binds directly to the 5'-end of the 23S rRNA, where it nucleates assembly of the 50S subunit. One of the proteins that surrounds the polypeptide exit tunnel on the outside of the subunit. This is Large ribosomal subunit protein uL24 from Solibacter usitatus (strain Ellin6076).